The sequence spans 426 residues: tRNA(Ile)-lysidine synthase (426 aa).

S27–S32 provides a ligand contact to ATP.

The protein belongs to the tRNA(Ile)-lysidine synthase family.

It localises to the cytoplasm. The catalysed reaction is cytidine(34) in tRNA(Ile2) + L-lysine + ATP = lysidine(34) in tRNA(Ile2) + AMP + diphosphate + H(+). Ligates lysine onto the cytidine present at position 34 of the AUA codon-specific tRNA(Ile) that contains the anticodon CAU, in an ATP-dependent manner. Cytidine is converted to lysidine, thus changing the amino acid specificity of the tRNA from methionine to isoleucine. The protein is tRNA(Ile)-lysidine synthase of Bacteroides thetaiotaomicron (strain ATCC 29148 / DSM 2079 / JCM 5827 / CCUG 10774 / NCTC 10582 / VPI-5482 / E50).